A 76-amino-acid chain; its full sequence is Ovarian cancer-related protein 1 (76 aa).

The protein is Ovarian cancer-related protein 1 (OCR1) of Homo sapiens (Human).